The following is a 95-amino-acid chain: Co-chaperonin GroES (95 aa).

It belongs to the GroES chaperonin family. In terms of assembly, heptamer of 7 subunits arranged in a ring. Interacts with the chaperonin GroEL.

It localises to the cytoplasm. Functionally, together with the chaperonin GroEL, plays an essential role in assisting protein folding. The GroEL-GroES system forms a nano-cage that allows encapsulation of the non-native substrate proteins and provides a physical environment optimized to promote and accelerate protein folding. GroES binds to the apical surface of the GroEL ring, thereby capping the opening of the GroEL channel. This is Co-chaperonin GroES from Francisella tularensis subsp. holarctica (strain FTNF002-00 / FTA).